Reading from the N-terminus, the 265-residue chain is Mlc titration factor A (265 aa).

Residues histidine 111, histidine 148, histidine 152, and glutamate 211 each contribute to the Zn(2+) site.

Belongs to the MtfA family. In terms of assembly, interacts with Mlc. The cofactor is Zn(2+).

Its subcellular location is the cytoplasm. Involved in the modulation of the activity of the glucose-phosphotransferase system (glucose-PTS). Interacts with the transcriptional repressor Mlc, preventing its interaction with DNA and leading to the modulation of expression of genes regulated by Mlc, including ptsG, which encodes the PTS system glucose-specific EIICB component. Functionally, shows zinc-dependent metallopeptidase activity. In Escherichia fergusonii, this protein is Mlc titration factor A.